Here is a 137-residue protein sequence, read N- to C-terminus: Golgin subfamily A member 7 (137 aa).

2 S-palmitoyl cysteine lipidation sites follow: C69 and C72.

This sequence belongs to the ERF4 family. As to quaternary structure, interacts with ZDHHC9.

The protein localises to the golgi apparatus membrane. May be involved in protein transport from Golgi to cell surface. The ZDHHC9-GOLGA7 complex is a palmitoyltransferase specific for HRAS and NRAS. The polypeptide is Golgin subfamily A member 7 (GOLGA7) (Gallus gallus (Chicken)).